A 551-amino-acid chain; its full sequence is Medium/long-chain-fatty-acid--CoA/3-oxocholest-4-en-26-oate--CoA ligase (551 aa).

Residues 172-180, aspartate 417, arginine 432, and lysine 523 each bind ATP; that span reads TGGTTGFPK.

The protein belongs to the ATP-dependent AMP-binding enzyme family.

The catalysed reaction is a medium-chain fatty acid + ATP + CoA = a medium-chain fatty acyl-CoA + AMP + diphosphate. It catalyses the reaction a long-chain fatty acid + ATP + CoA = a long-chain fatty acyl-CoA + AMP + diphosphate. It carries out the reaction (25S)-3-oxocholest-4-en-26-oate + ATP + CoA = (25S)-3-oxocholest-4-en-26-oyl-CoA + AMP + diphosphate. It participates in lipid metabolism; fatty acid biosynthesis. Its pathway is steroid metabolism; cholesterol metabolism. Functionally, plays an essential role in degradation of the side chains of C-24 branched-chain sterols. Not essential for degradation of straight chain sterols such as cholesterol. Catalyzes the activation of medium/long-chain fatty acids as acyl-coenzyme A (acyl-CoA), which are then transferred to the multifunctional polyketide synthase (PKS) type III for further chain extension. May be involved in the degradation of cholesterol via the degradation of the side chains of C-24 branched-chain sterols. This is Medium/long-chain-fatty-acid--CoA/3-oxocholest-4-en-26-oate--CoA ligase from Mycolicibacterium smegmatis (strain ATCC 700084 / mc(2)155) (Mycobacterium smegmatis).